A 693-amino-acid polypeptide reads, in one-letter code: MA3 DOMAIN-CONTAINING TRANSLATION REGULATORY FACTOR 2 (693 aa).

The segment at 25-60 (SLDPLPQANMAEDLTKSRRHSPIKVEGSEETWGVED) is disordered. In terms of domain architecture, MI 1 spans 90–211 (EYKKKATVIV…PPAFLKKQMK (122 aa)). The Nuclear localization signal 1 signature appears at 241–248 (EKRWGGTD). 3 MI domains span residues 254 to 375 (DVKA…SLSA), 389 to 510 (VFKD…EVLN), and 560 to 681 (EVKE…EDSQ). Positions 430 to 437 (VKYLITLA) match the Nuclear localization signal 2 motif. The disordered stretch occupies residues 673–693 (ESFASEDSQSKKQNGSSSSSG). Low complexity predominate over residues 683-693 (KKQNGSSSSSG).

It belongs to the PDCD4 family. As to quaternary structure, binds to EIF4A1. The association with ribosomes is modulated by cellular energy status and TOR activity. Mostly expressed in reproductive tissues, such as flower buds and flowers, and, to a lower extent, in vegetative tissues, such as leaves, roots and stems.

Its subcellular location is the nucleus. It is found in the cytoplasm. The protein resides in the cytosol. Involved in target of rapamycin (TOR)-regulated translation control, especially under energy-deficient conditions. This Arabidopsis thaliana (Mouse-ear cress) protein is MA3 DOMAIN-CONTAINING TRANSLATION REGULATORY FACTOR 2.